An 87-amino-acid polypeptide reads, in one-letter code: Developmentally-regulated ectodermal protein (87 aa).

Positions 1–16 are cleaved as a signal peptide; that stretch reads MKRLLVLTLVSAILMA.

The sequence is that of Developmentally-regulated ectodermal protein from Tripneustes gratilla (Hawaian sea urchin).